Here is a 148-residue protein sequence, read N- to C-terminus: EKC/KEOPS complex subunit Lage3 (148 aa).

Positions 1–21 are disordered; it reads MQTAHTGLSHTADGADGQTSR.

The protein belongs to the CTAG/PCC1 family. As to quaternary structure, component of the EKC/KEOPS complex composed of at least GON7, TP53RK, TPRKB, OSGEP and LAGE3; the whole complex dimerizes.

It localises to the cytoplasm. Its subcellular location is the nucleus. In terms of biological role, component of the EKC/KEOPS complex that is required for the formation of a threonylcarbamoyl group on adenosine at position 37 (t(6)A37) in tRNAs that read codons beginning with adenine. The complex is probably involved in the transfer of the threonylcarbamoyl moiety of threonylcarbamoyl-AMP (TC-AMP) to the N6 group of A37. LAGE3 functions as a dimerization module for the complex. The protein is EKC/KEOPS complex subunit Lage3 of Mus musculus (Mouse).